A 354-amino-acid chain; its full sequence is Selenide, water dikinase (354 aa).

Cys23 is an active-site residue. Residues Lys26 and 54-56 contribute to the ATP site; that span reads TSD. Residue Asp57 coordinates Mg(2+). ATP is bound by residues Asp74, Asp97, and 145-147; that span reads GHS. Asp97 serves as a coordination point for Mg(2+). Asp233 contributes to the Mg(2+) binding site.

It belongs to the selenophosphate synthase 1 family. Class I subfamily. Homodimer. Requires Mg(2+) as cofactor.

It catalyses the reaction hydrogenselenide + ATP + H2O = selenophosphate + AMP + phosphate + 2 H(+). In terms of biological role, synthesizes selenophosphate from selenide and ATP. The sequence is that of Selenide, water dikinase from Burkholderia cenocepacia (strain ATCC BAA-245 / DSM 16553 / LMG 16656 / NCTC 13227 / J2315 / CF5610) (Burkholderia cepacia (strain J2315)).